A 715-amino-acid polypeptide reads, in one-letter code: 1,4-alpha-glucan branching enzyme GlgB (715 aa).

The Nucleophile role is filled by aspartate 399. The Proton donor role is filled by glutamate 452.

It belongs to the glycosyl hydrolase 13 family. GlgB subfamily. Monomer.

The enzyme catalyses Transfers a segment of a (1-&gt;4)-alpha-D-glucan chain to a primary hydroxy group in a similar glucan chain.. It participates in glycan biosynthesis; glycogen biosynthesis. Functionally, catalyzes the formation of the alpha-1,6-glucosidic linkages in glycogen by scission of a 1,4-alpha-linked oligosaccharide from growing alpha-1,4-glucan chains and the subsequent attachment of the oligosaccharide to the alpha-1,6 position. This is 1,4-alpha-glucan branching enzyme GlgB from Rhodopseudomonas palustris (strain BisA53).